We begin with the raw amino-acid sequence, 360 residues long: DNA replication and repair protein RecF (360 aa).

Residue 30 to 37 (GQNGSGKT) coordinates ATP.

It belongs to the RecF family.

Its subcellular location is the cytoplasm. Functionally, the RecF protein is involved in DNA metabolism; it is required for DNA replication and normal SOS inducibility. RecF binds preferentially to single-stranded, linear DNA. It also seems to bind ATP. The chain is DNA replication and repair protein RecF from Shewanella loihica (strain ATCC BAA-1088 / PV-4).